The following is a 205-amino-acid chain: Ephrin-A1 (205 aa).

The first 18 residues, 1–18 (MEFLWAPLLGLCCSLAAA), serve as a signal peptide directing secretion. In terms of domain architecture, Ephrin RBD spans 19–151 (DRHTVFWNSS…KLKVTVSGKI (133 aa)). The N-linked (GlcNAc...) asparagine glycan is linked to N26. 2 disulfide bridges follow: C51–C92 and C80–C140. S182 is lipidated: GPI-anchor amidated serine. Positions 183–205 (AAPRLSPLAWAVLLLPFLLLQTS) are cleaved as a propeptide — removed in mature form.

The protein belongs to the ephrin family. In terms of assembly, monomer. Homodimer. Forms heterodimers with EPHA2. Binds to the receptor tyrosine kinases EPHA2, EPHA3, EPHA4, EPHA5, EPHA6 and EPHA7. Also binds with low affinity to EPHA1. Post-translationally, undergoes proteolysis by a metalloprotease to give rise to a soluble monomeric form. In terms of processing, N-Glycosylation is required for binding to EPHA2 receptor and inducing its internalization.

It is found in the cell membrane. Its subcellular location is the secreted. In terms of biological role, cell surface GPI-bound ligand for Eph receptors, a family of receptor tyrosine kinases which are crucial for migration, repulsion and adhesion during neuronal, vascular and epithelial development. Binds promiscuously Eph receptors residing on adjacent cells, leading to contact-dependent bidirectional signaling into neighboring cells. Plays an important role in angiogenesis and tumor neovascularization. The recruitment of VAV2, VAV3 and PI3-kinase p85 subunit by phosphorylated EPHA2 is critical for EFNA1-induced RAC1 GTPase activation and vascular endothelial cell migration and assembly. Exerts anti-oncogenic effects in tumor cells through activation and down-regulation of EPHA2. Activates EPHA2 by inducing tyrosine phosphorylation which leads to its internalization and degradation. Acts as a negative regulator in the tumorigenesis of gliomas by down-regulating EPHA2 and FAK. Can evoke collapse of embryonic neuronal growth cone and regulates dendritic spine morphogenesis. The polypeptide is Ephrin-A1 (EFNA1) (Sus scrofa (Pig)).